Reading from the N-terminus, the 313-residue chain is tRNA dimethylallyltransferase (313 aa).

G11–T18 provides a ligand contact to ATP. T13–T18 provides a ligand contact to substrate. Interaction with substrate tRNA regions lie at residues D36–L39, Q160–R164, and R243–R248.

The protein belongs to the IPP transferase family. As to quaternary structure, monomer. Requires Mg(2+) as cofactor.

It carries out the reaction adenosine(37) in tRNA + dimethylallyl diphosphate = N(6)-dimethylallyladenosine(37) in tRNA + diphosphate. Functionally, catalyzes the transfer of a dimethylallyl group onto the adenine at position 37 in tRNAs that read codons beginning with uridine, leading to the formation of N6-(dimethylallyl)adenosine (i(6)A). The sequence is that of tRNA dimethylallyltransferase from Neisseria gonorrhoeae (strain ATCC 700825 / FA 1090).